The chain runs to 542 residues: Chaperonin GroEL 1 (542 aa).

Residues 30 to 33, lysine 51, 87 to 91, glycine 415, and aspartate 496 contribute to the ATP site; these read TLGP and DGTTT.

It belongs to the chaperonin (HSP60) family. In terms of assembly, forms a cylinder of 14 subunits composed of two heptameric rings stacked back-to-back. Interacts with the co-chaperonin GroES.

It is found in the cytoplasm. It catalyses the reaction ATP + H2O + a folded polypeptide = ADP + phosphate + an unfolded polypeptide.. Functionally, together with its co-chaperonin GroES, plays an essential role in assisting protein folding. The GroEL-GroES system forms a nano-cage that allows encapsulation of the non-native substrate proteins and provides a physical environment optimized to promote and accelerate protein folding. The polypeptide is Chaperonin GroEL 1 (Sinorhizobium fredii (strain NBRC 101917 / NGR234)).